A 354-amino-acid chain; its full sequence is Uroporphyrinogen decarboxylase (354 aa).

Substrate is bound by residues 30 to 34 (RQAGR), Asp-79, Tyr-154, Ser-209, and His-333.

It belongs to the uroporphyrinogen decarboxylase family. As to quaternary structure, homodimer.

Its subcellular location is the cytoplasm. The catalysed reaction is uroporphyrinogen III + 4 H(+) = coproporphyrinogen III + 4 CO2. The protein operates within porphyrin-containing compound metabolism; protoporphyrin-IX biosynthesis; coproporphyrinogen-III from 5-aminolevulinate: step 4/4. In terms of biological role, catalyzes the decarboxylation of four acetate groups of uroporphyrinogen-III to yield coproporphyrinogen-III. In Mycolicibacterium vanbaalenii (strain DSM 7251 / JCM 13017 / BCRC 16820 / KCTC 9966 / NRRL B-24157 / PYR-1) (Mycobacterium vanbaalenii), this protein is Uroporphyrinogen decarboxylase.